We begin with the raw amino-acid sequence, 488 residues long: 3-octaprenyl-4-hydroxybenzoate carboxy-lyase (488 aa).

A Mn(2+)-binding site is contributed by Asn172. Prenylated FMN is bound by residues 175-177, 189-191, and 194-195; these read IYR, RWL, and RG. Glu238 is a Mn(2+) binding site. The active-site Proton donor is Asp287.

It belongs to the UbiD family. In terms of assembly, homohexamer. The cofactor is prenylated FMN. Mn(2+) is required as a cofactor.

The protein resides in the cell membrane. It carries out the reaction a 4-hydroxy-3-(all-trans-polyprenyl)benzoate + H(+) = a 2-(all-trans-polyprenyl)phenol + CO2. Its pathway is cofactor biosynthesis; ubiquinone biosynthesis. Functionally, catalyzes the decarboxylation of 3-octaprenyl-4-hydroxy benzoate to 2-octaprenylphenol, an intermediate step in ubiquinone biosynthesis. The sequence is that of 3-octaprenyl-4-hydroxybenzoate carboxy-lyase from Pseudomonas putida (strain W619).